Consider the following 499-residue polypeptide: Eukaryotic peptide chain release factor GTP-binding subunit ERF3A (499 aa).

The segment at 1–69 (MELSEPIVEN…PKSVVAPPGA (69 aa)) is disordered. Over residues 41 to 50 (RPPEESAHEM) the composition is skewed to basic and acidic residues. Residues 72-298 (KEHVNVVFIG…DNLPNFNRSV (227 aa)) enclose the tr-type G domain. A G1 region spans residues 81-88 (GHVDAGKS). Position 84 to 89 (84 to 89 (DAGKST)) interacts with GTP. The segment at 137 to 141 (GKTVE) is G2. The interval 158 to 161 (DAPG) is G3. GTP contacts are provided by residues 220–223 (NKMD) and 262–264 (SGL). The segment at 220-223 (NKMD) is G4. Residues 262–264 (SGL) are G5.

This sequence belongs to the TRAFAC class translation factor GTPase superfamily. Classic translation factor GTPase family. ERF3 subfamily. As to quaternary structure, component of the eRF1-eRF3-GTP ternary complex, composed of ETF1/ERF1 and ERF3 (GSPT1/ERF3A or GSPT2/ERF3B) and GTP. Component of the transient SURF (SMG1-UPF1-eRF1-eRF3) complex. The ETF1-GSPT1 complex interacts with JMJD4. Interacts with PABPC1. Interacts with SHFL.

The enzyme catalyses GTP + H2O = GDP + phosphate + H(+). Functionally, GTPase component of the eRF1-eRF3-GTP ternary complex, a ternary complex that mediates translation termination in response to the termination codons UAA, UAG and UGA. GSPT1/ERF3A mediates ETF1/ERF1 delivery to stop codons: The eRF1-eRF3-GTP complex binds to a stop codon in the ribosomal A-site. GTP hydrolysis by GSPT1/ERF3A induces a conformational change that leads to its dissociation, permitting ETF1/ERF1 to accommodate fully in the A-site. Component of the transient SURF complex which recruits UPF1 to stalled ribosomes in the context of nonsense-mediated decay (NMD) of mRNAs containing premature stop codons. Required for SHFL-mediated translation termination which inhibits programmed ribosomal frameshifting (-1PRF) of mRNA from viruses and cellular genes. The protein is Eukaryotic peptide chain release factor GTP-binding subunit ERF3A (GSPT1) of Homo sapiens (Human).